The chain runs to 160 residues: tRNA (cytidine(34)-2'-O)-methyltransferase (160 aa).

S-adenosyl-L-methionine-binding residues include Leu-78, Gly-100, Ile-120, and Ser-128.

Belongs to the class IV-like SAM-binding methyltransferase superfamily. RNA methyltransferase TrmH family. TrmL subfamily. Homodimer.

It is found in the cytoplasm. It catalyses the reaction cytidine(34) in tRNA + S-adenosyl-L-methionine = 2'-O-methylcytidine(34) in tRNA + S-adenosyl-L-homocysteine + H(+). It carries out the reaction 5-carboxymethylaminomethyluridine(34) in tRNA(Leu) + S-adenosyl-L-methionine = 5-carboxymethylaminomethyl-2'-O-methyluridine(34) in tRNA(Leu) + S-adenosyl-L-homocysteine + H(+). In terms of biological role, methylates the ribose at the nucleotide 34 wobble position in the two leucyl isoacceptors tRNA(Leu)(CmAA) and tRNA(Leu)(cmnm5UmAA). Catalyzes the methyl transfer from S-adenosyl-L-methionine to the 2'-OH of the wobble nucleotide. The polypeptide is tRNA (cytidine(34)-2'-O)-methyltransferase (Beijerinckia indica subsp. indica (strain ATCC 9039 / DSM 1715 / NCIMB 8712)).